The sequence spans 30 residues: Varv peptide B (30 aa).

A cross-link (cyclopeptide (Gly-Asn)) is located at residues 1–30; it reads GLPVCGETCFGGTCNTPGCSCDPWPMCSRN. 3 disulfide bridges follow: C5/C19, C9/C21, and C14/C27.

This is a cyclic peptide.

Probably participates in a plant defense mechanism. This Viola arvensis (European field pansy) protein is Varv peptide B.